The following is a 90-amino-acid chain: Large ribosomal subunit protein bL27 (90 aa).

The segment at 1–24 (MAHKKGTGSTRNGRDSNSKRLGVK) is disordered.

It belongs to the bacterial ribosomal protein bL27 family.

This chain is Large ribosomal subunit protein bL27, found in Prochlorococcus marinus (strain NATL1A).